A 671-amino-acid chain; its full sequence is UvrABC system protein B (671 aa).

The region spanning 25-412 is the Helicase ATP-binding domain; the sequence is EGIDAGLAHQ…AGRVVEQVVR (388 aa). ATP is bound at residue 38-45; that stretch reads GVTGSGKT. The Beta-hairpin motif lies at 91–114; sequence YYDYYQPEAYVPSSDTFIEKDASI. Residues 429-595 form the Helicase C-terminal domain; the sequence is QVDDLLSEIH…GVFKDVADIM (167 aa). The tract at residues 600 to 624 is disordered; it reads VPGSRSKKRKGMAKAAEENARYENE. A compositionally biased stretch (basic and acidic residues) spans 614 to 624; that stretch reads AAEENARYENE. In terms of domain architecture, UVR spans 632–667; the sequence is NKRIRQLEEKMYQLARDLEFEAAAQMRDEIGKLRER.

The protein belongs to the UvrB family. Forms a heterotetramer with UvrA during the search for lesions. Interacts with UvrC in an incision complex.

The protein localises to the cytoplasm. The UvrABC repair system catalyzes the recognition and processing of DNA lesions. A damage recognition complex composed of 2 UvrA and 2 UvrB subunits scans DNA for abnormalities. Upon binding of the UvrA(2)B(2) complex to a putative damaged site, the DNA wraps around one UvrB monomer. DNA wrap is dependent on ATP binding by UvrB and probably causes local melting of the DNA helix, facilitating insertion of UvrB beta-hairpin between the DNA strands. Then UvrB probes one DNA strand for the presence of a lesion. If a lesion is found the UvrA subunits dissociate and the UvrB-DNA preincision complex is formed. This complex is subsequently bound by UvrC and the second UvrB is released. If no lesion is found, the DNA wraps around the other UvrB subunit that will check the other stand for damage. The chain is UvrABC system protein B from Pseudomonas savastanoi pv. phaseolicola (strain 1448A / Race 6) (Pseudomonas syringae pv. phaseolicola (strain 1448A / Race 6)).